The following is a 275-amino-acid chain: Diaminopimelate epimerase (275 aa).

3 residues coordinate substrate: Asn-12, Gln-45, and Asn-65. Residue Cys-74 is the Proton donor of the active site. Substrate contacts are provided by residues 75–76 (GN), Asn-158, Asn-191, and 209–210 (ER). Cys-218 serves as the catalytic Proton acceptor. 219-220 (GT) provides a ligand contact to substrate.

Belongs to the diaminopimelate epimerase family. In terms of assembly, homodimer.

It is found in the cytoplasm. It catalyses the reaction (2S,6S)-2,6-diaminopimelate = meso-2,6-diaminopimelate. It functions in the pathway amino-acid biosynthesis; L-lysine biosynthesis via DAP pathway; DL-2,6-diaminopimelate from LL-2,6-diaminopimelate: step 1/1. Catalyzes the stereoinversion of LL-2,6-diaminopimelate (L,L-DAP) to meso-diaminopimelate (meso-DAP), a precursor of L-lysine and an essential component of the bacterial peptidoglycan. The polypeptide is Diaminopimelate epimerase (Shewanella sp. (strain MR-4)).